The primary structure comprises 136 residues: Lipoprotein YghG (136 aa).

The N-terminal stretch at 1–24 (MSIKQMPGRVLISLLLSVTGLLSG) is a signal peptide. Cys-25 is lipidated: N-palmitoyl cysteine. Cys-25 carries the S-diacylglycerol cysteine lipid modification.

It belongs to the GspS/AspS pilotin family.

Its subcellular location is the cell outer membrane. Functionally, involved in a type II secretion system (T2SS, formerly general secretion pathway, GSP) for the export of folded proteins across the outer membrane. In a functional T2SS this subunit helps assemble the outer membrane channel. This Escherichia coli (strain K12) protein is Lipoprotein YghG (yghG).